A 378-amino-acid chain; its full sequence is Tetraacyldisaccharide 4'-kinase (378 aa).

63-70 (AVGGAGKT) contacts ATP.

The protein belongs to the LpxK family.

It catalyses the reaction a lipid A disaccharide + ATP = a lipid IVA + ADP + H(+). Its pathway is glycolipid biosynthesis; lipid IV(A) biosynthesis; lipid IV(A) from (3R)-3-hydroxytetradecanoyl-[acyl-carrier-protein] and UDP-N-acetyl-alpha-D-glucosamine: step 6/6. In terms of biological role, transfers the gamma-phosphate of ATP to the 4'-position of a tetraacyldisaccharide 1-phosphate intermediate (termed DS-1-P) to form tetraacyldisaccharide 1,4'-bis-phosphate (lipid IVA). In Anaeromyxobacter dehalogenans (strain 2CP-C), this protein is Tetraacyldisaccharide 4'-kinase.